Reading from the N-terminus, the 508-residue chain is MDKKKYIITLDEGTTSCRSIVFDKQAKIVSVAQNEFTQYFPQSGWVEHDPLEIWNTQLSTMQSVKNKAQIKSVNVEAVGITNQRETVVLWNKETGLPVYNAIVWQDRRTSEYCETLTKHVDKVREKTGLIINPYFSGTKIRWILKNVPLAQKTLKAGKLLAGTIDSWLIWKLTGGKVHATDVSNASRTLLFNIHTMDWDQELLDLFEIPRSILPEVKSSSEVYGYVEPSLWSQRATAKVPITGVAGDQQSALFGQLCLKPGMVKNTYGTGCFTLMNIGEKPIMSKNKLLTTVAWKLGKKKPVYALEGSVFIAGAAVQWIRDGLRLIYDAAESDFYANLASKQDTHQVYLVPSFTGLGAPYWDSYSRGAIFGLERGTKKEHIIKATLESIVFQTNDLIKAMSSDVGKKIEVVKVDGGATRSEYIMQFQSSISGVNVIRPKNIESTALGATFLAGLAVGYWKDLKELEKLVKVDKEFKPKLDKEKVEKLVHGWNVAVKRTFNWMKEVDLK.

Thr-14 contributes to the ADP binding site. ATP-binding residues include Thr-14, Thr-15, and Ser-16. Residue Thr-14 coordinates sn-glycerol 3-phosphate. Residue Arg-18 coordinates ADP. 4 residues coordinate sn-glycerol 3-phosphate: Arg-84, Glu-85, Tyr-134, and Asp-247. Positions 84, 85, 134, 247, and 248 each coordinate glycerol. Residues Thr-269 and Gly-313 each contribute to the ADP site. Positions 269, 313, 317, and 416 each coordinate ATP. Residue Gly-416 coordinates ADP.

It belongs to the FGGY kinase family.

The catalysed reaction is glycerol + ATP = sn-glycerol 3-phosphate + ADP + H(+). Its pathway is polyol metabolism; glycerol degradation via glycerol kinase pathway; sn-glycerol 3-phosphate from glycerol: step 1/1. Its activity is regulated as follows. Inhibited by fructose 1,6-bisphosphate (FBP). Key enzyme in the regulation of glycerol uptake and metabolism. Catalyzes the phosphorylation of glycerol to yield sn-glycerol 3-phosphate. This Mycoplasmoides gallisepticum (strain R(low / passage 15 / clone 2)) (Mycoplasma gallisepticum) protein is Glycerol kinase.